The chain runs to 339 residues: Glycerol-3-phosphate dehydrogenase [NAD(P)+] (339 aa).

Residues serine 15, tyrosine 16, histidine 36, and lysine 110 each contribute to the NADPH site. Residues lysine 110, glycine 139, and threonine 141 each coordinate sn-glycerol 3-phosphate. Residue alanine 143 participates in NADPH binding. Sn-glycerol 3-phosphate-binding residues include lysine 195, aspartate 248, serine 258, arginine 259, and asparagine 260. The Proton acceptor role is filled by lysine 195. Arginine 259 is an NADPH binding site. NADPH contacts are provided by valine 283 and glutamate 285.

Belongs to the NAD-dependent glycerol-3-phosphate dehydrogenase family.

It is found in the cytoplasm. The catalysed reaction is sn-glycerol 3-phosphate + NAD(+) = dihydroxyacetone phosphate + NADH + H(+). It carries out the reaction sn-glycerol 3-phosphate + NADP(+) = dihydroxyacetone phosphate + NADPH + H(+). Its pathway is membrane lipid metabolism; glycerophospholipid metabolism. Catalyzes the reduction of the glycolytic intermediate dihydroxyacetone phosphate (DHAP) to sn-glycerol 3-phosphate (G3P), the key precursor for phospholipid synthesis. This is Glycerol-3-phosphate dehydrogenase [NAD(P)+] from Pectobacterium carotovorum subsp. carotovorum (strain PC1).